The sequence spans 233 residues: Large ribosomal subunit protein uL1 (233 aa).

Belongs to the universal ribosomal protein uL1 family. In terms of assembly, part of the 50S ribosomal subunit.

In terms of biological role, binds directly to 23S rRNA. The L1 stalk is quite mobile in the ribosome, and is involved in E site tRNA release. Functionally, protein L1 is also a translational repressor protein, it controls the translation of the L11 operon by binding to its mRNA. The chain is Large ribosomal subunit protein uL1 from Deinococcus geothermalis (strain DSM 11300 / CIP 105573 / AG-3a).